The following is a 474-amino-acid chain: ATP synthase subunit beta (474 aa).

An ATP-binding site is contributed by 152 to 159 (GGAGVGKT).

It belongs to the ATPase alpha/beta chains family. In terms of assembly, F-type ATPases have 2 components, CF(1) - the catalytic core - and CF(0) - the membrane proton channel. CF(1) has five subunits: alpha(3), beta(3), gamma(1), delta(1), epsilon(1). CF(0) has three main subunits: a(1), b(2) and c(9-12). The alpha and beta chains form an alternating ring which encloses part of the gamma chain. CF(1) is attached to CF(0) by a central stalk formed by the gamma and epsilon chains, while a peripheral stalk is formed by the delta and b chains.

It is found in the cell inner membrane. It catalyses the reaction ATP + H2O + 4 H(+)(in) = ADP + phosphate + 5 H(+)(out). In terms of biological role, produces ATP from ADP in the presence of a proton gradient across the membrane. The catalytic sites are hosted primarily by the beta subunits. The chain is ATP synthase subunit beta from Paramagnetospirillum magneticum (strain ATCC 700264 / AMB-1) (Magnetospirillum magneticum).